We begin with the raw amino-acid sequence, 238 residues long: tRNA (guanine-N(7)-)-methyltransferase (238 aa).

Glu-70, Asp-95, Asp-122, and Asp-145 together coordinate S-adenosyl-L-methionine. Asp-145 is an active-site residue. Substrate contacts are provided by residues Lys-149, Asp-181, and 216–219 (TKFE).

It belongs to the class I-like SAM-binding methyltransferase superfamily. TrmB family.

It catalyses the reaction guanosine(46) in tRNA + S-adenosyl-L-methionine = N(7)-methylguanosine(46) in tRNA + S-adenosyl-L-homocysteine. The protein operates within tRNA modification; N(7)-methylguanine-tRNA biosynthesis. Functionally, catalyzes the formation of N(7)-methylguanine at position 46 (m7G46) in tRNA. The sequence is that of tRNA (guanine-N(7)-)-methyltransferase from Neisseria meningitidis serogroup B (strain ATCC BAA-335 / MC58).